A 255-amino-acid polypeptide reads, in one-letter code: Aprataxin and PNK-like factor (255 aa).

The span at 1–11 (MSATDASTADS) shows a compositional bias: low complexity. 3 disordered regions span residues 1-117 (MSAT…VSSS), 131-168 (RRNP…FGNA), and 195-255 (RLRQ…DDYD). Composition is skewed to basic and acidic residues over residues 12 to 22 (GAKRKSSEDIT), 40 to 64 (KSEE…KAEP), and 137 to 150 (RSAE…DYRR). 2 consecutive PBZ-type zinc fingers follow at residues 121–142 (TSCR…AEAH) and 161–182 (PACP…DYSH). Residues 207 to 218 (DDSGTDEEDEPF) show a composition bias toward acidic residues. The span at 221–230 (DNDRDADYRP) shows a compositional bias: basic and acidic residues. Residues 234–244 (INEDEDDELEF) are compositionally biased toward acidic residues.

Belongs to the APLF family.

Displays apurinic-apyrimidinic (AP) endonuclease and 3'-5' exonuclease activities in vitro. This is Aprataxin and PNK-like factor from Drosophila melanogaster (Fruit fly).